We begin with the raw amino-acid sequence, 456 residues long: Transcription factor tau subunit sfc1 (456 aa).

Disordered stretches follow at residues 394-416 (DRYSNFDEQDNTDLNDTVRGLNT) and 437-456 (HEGFEDLEEIDDDYDDIFGD). Positions 407 to 416 (LNDTVRGLNT) are enriched in polar residues. Residues 441 to 456 (EDLEEIDDDYDDIFGD) show a composition bias toward acidic residues.

In terms of assembly, component of the TFIIIC complex including sfc1, sfc3, sfc4, sfc6 and sfc7. The subunits are organized in two globular domains, tauA and tauB, connected by a proteolysis-sensitive and flexible linker. Interacts with sfc3, sfc4 and sfc6. Post-translationally, phosphorylated.

The protein resides in the nucleus. In terms of biological role, TFIIIC mediates tRNA and 5S RNA gene activation by binding to intragenic promoter elements. Upstream of the transcription start site, TFIIIC assembles the initiation complex TFIIIB-TFIIIC-tDNA, which is sufficient for RNA polymerase III recruitment and function. Part of the tauA domain of TFIIIC that binds boxA DNA promoter sites of tRNA and similar genes. Participates in the interconnection of tauA with tauB via its contacts with sfc3 and sfc6. Serves as a scaffold critical for tauA-DNA spatial configuration and tauB-DNA stability. Localizes to chromatin insulator sequence without recruiting RNA polymerase III and plays a role in nuclear organization. The polypeptide is Transcription factor tau subunit sfc1 (sfc1) (Schizosaccharomyces pombe (strain 972 / ATCC 24843) (Fission yeast)).